Here is a 347-residue protein sequence, read N- to C-terminus: NADH-ubiquinone oxidoreductase chain 2 (347 aa).

11 consecutive transmembrane segments (helical) span residues 3–23 (PLIF…VMIS), 25–45 (HWLM…PVLM), 59–79 (YFLT…INLL), 96–116 (IIMT…FWVP), 122–142 (VSLT…LSVL), 145–165 (IAPV…IMIG), 178–198 (ILAY…IFNP), 202–222 (LLNL…FMTV), 240–260 (ITTS…LTGF), 276–296 (IILA…YMRL), and 326–346 (LSPL…MMIL).

Belongs to the complex I subunit 2 family. In terms of assembly, core subunit of respiratory chain NADH dehydrogenase (Complex I) which is composed of 45 different subunits. Interacts with TMEM242.

The protein localises to the mitochondrion inner membrane. The catalysed reaction is a ubiquinone + NADH + 5 H(+)(in) = a ubiquinol + NAD(+) + 4 H(+)(out). In terms of biological role, core subunit of the mitochondrial membrane respiratory chain NADH dehydrogenase (Complex I) which catalyzes electron transfer from NADH through the respiratory chain, using ubiquinone as an electron acceptor. Essential for the catalytic activity and assembly of complex I. This is NADH-ubiquinone oxidoreductase chain 2 from Peropteryx macrotis (Lesser dog-like bat).